The primary structure comprises 841 residues: Neuronal tyrosine-phosphorylated phosphoinositide-3-kinase adapter 1 (841 aa).

5 disordered regions span residues Met1–Arg45, Pro64–Leu448, Arg655–Ile679, Arg745–Pro769, and Leu812–His833. The span at Thr8–Ser25 shows a compositional bias: basic and acidic residues. The span at Lys26–Gly39 shows a compositional bias: low complexity. Residues Ser76 to Pro186 are involved in CYFIP1- and NCKAP1-binding. Residues Val94 to Gly103 show a composition bias toward gly residues. Over residues Pro114–Ser123 the composition is skewed to basic residues. Positions Ser167–Phe176 are enriched in polar residues. Over residues Phe224–Gly243 the composition is skewed to gly residues. The span at Ser252–Tyr261 shows a compositional bias: acidic residues. Residues Gly279 to Leu295 are compositionally biased toward pro residues. The span at Pro759–Pro769 shows a compositional bias: pro residues.

It belongs to the NYAP family. As to quaternary structure, interacts with ACOT9, ARHGAP26 and PIK3R2. Interacts with components of the WAVE1 complex, CYFIP1 and NCKAP1; this interaction mediates PI3K-WAVE1 association and actin cytoskeleton remodeling. In terms of processing, phosphorylated on tyrosine residues by FYN upon stimulation with CNTN5.

In terms of biological role, activates PI3K and concomitantly recruits the WAVE1 complex to the close vicinity of PI3K and regulates neuronal morphogenesis. This Homo sapiens (Human) protein is Neuronal tyrosine-phosphorylated phosphoinositide-3-kinase adapter 1 (NYAP1).